Here is a 152-residue protein sequence, read N- to C-terminus: TRAPP-associated protein TCA17 (152 aa).

The protein belongs to the TRAPP small subunits family. Sedlin subfamily. In terms of assembly, interacts with the TRAPP II complex; TRAPP II subunits TRS33 and TRS65 are required for this interaction.

The protein resides in the golgi apparatus. It is found in the trans-Golgi network. In terms of biological role, required, together with the TRAPP II subunit TRS33, for TRAPP II complex assembly or stability, and for proper Golgi localization of TRAPP and the Rab GTPase YPT31. This is TRAPP-associated protein TCA17 (TCA17) from Saccharomyces cerevisiae (strain ATCC 204508 / S288c) (Baker's yeast).